We begin with the raw amino-acid sequence, 58 residues long: Large ribosomal subunit protein bL32 (58 aa).

It belongs to the bacterial ribosomal protein bL32 family.

This Carboxydothermus hydrogenoformans (strain ATCC BAA-161 / DSM 6008 / Z-2901) protein is Large ribosomal subunit protein bL32.